The primary structure comprises 704 residues: ATP-dependent zinc metalloprotease FTSH 5, chloroplastic (704 aa).

A chloroplast-targeting transit peptide spans M1 to S58. The N-terminal 18 residues, Q59–A76, are a transit peptide targeting the thylakoid. A helical transmembrane segment spans residues F193–F213. G290–T297 is a binding site for ATP. Residue H512 participates in Zn(2+) binding. The active site involves E513. Zn(2+)-binding residues include H516 and D593.

The protein in the N-terminal section; belongs to the AAA ATPase family. In the C-terminal section; belongs to the peptidase M41 family. Heterohexamers with FTSH1, FTSH2 and FTSH8. Zn(2+) is required as a cofactor. As to expression, ubiquitous.

The protein localises to the plastid. It localises to the chloroplast thylakoid membrane. Functionally, part of a complex that function as an ATP-dependent zinc metallopeptidase. Involved in the thylakoid formation and in the removal of damaged D1 in the photosystem II, preventing cell death under high-intensity light conditions. Not involved in the degradation of the light-harvesting complex of photosystem II (LHC II) or in thermotolerance. This Arabidopsis thaliana (Mouse-ear cress) protein is ATP-dependent zinc metalloprotease FTSH 5, chloroplastic (FTSH5).